Reading from the N-terminus, the 71-residue chain is Large ribosomal subunit protein uL29 (71 aa).

The protein belongs to the universal ribosomal protein uL29 family.

In Rickettsia massiliae (strain Mtu5), this protein is Large ribosomal subunit protein uL29.